Consider the following 446-residue polypeptide: Aspartokinase (446 aa).

An RPE1 insert domain is found at isoleucine 250–tyrosine 294.

This sequence belongs to the aspartokinase family.

The catalysed reaction is L-aspartate + ATP = 4-phospho-L-aspartate + ADP. The protein operates within amino-acid biosynthesis; L-lysine biosynthesis via DAP pathway; (S)-tetrahydrodipicolinate from L-aspartate: step 1/4. Its pathway is amino-acid biosynthesis; L-methionine biosynthesis via de novo pathway; L-homoserine from L-aspartate: step 1/3. It functions in the pathway amino-acid biosynthesis; L-threonine biosynthesis; L-threonine from L-aspartate: step 1/5. This is Aspartokinase (lysC) from Rickettsia prowazekii (strain Madrid E).